Reading from the N-terminus, the 257-residue chain is MADS-box transcription factor 1 (257 aa).

An MADS-box domain is found at 1-61 (MGRGKVELKR…GRLFEFSSSS (61 aa)). The 91-residue stretch at 85-175 (NEINYQEYLK…RKKLQETSAE (91 aa)) folds into the K-box domain.

May interact with the K-box of MADS6, MADS14 and MADS15.

Its subcellular location is the nucleus. In terms of biological role, probable transcription factor involved in the development of floral organs. Required for the formation of inner floral organs (lodicules, stamens and carpels, or whorls 2, 3 and 4) and the lemma and palea (whorl 1), which are grass floral organs analogous to sepals. May be involved in the control of flowering time. Seems to act as transcriptional activator. May act upstream of the auxin-responsive protein GH3.8. The chain is MADS-box transcription factor 1 (MADS1) from Oryza sativa subsp. indica (Rice).